A 354-amino-acid chain; its full sequence is Fructose-bisphosphate aldolase 2 (354 aa).

Ser50 is a binding site for D-glyceraldehyde 3-phosphate. Asp83 (proton donor) is an active-site residue. Zn(2+)-binding residues include His84, Asp105, Glu142, and His198. Gly199 contributes to the dihydroxyacetone phosphate binding site. His232 contributes to the Zn(2+) binding site. Residues Gly233–Ser235 and Asn275–Thr278 each bind dihydroxyacetone phosphate.

This sequence belongs to the class II fructose-bisphosphate aldolase family. Homodimer. It depends on Zn(2+) as a cofactor.

It catalyses the reaction beta-D-fructose 1,6-bisphosphate = D-glyceraldehyde 3-phosphate + dihydroxyacetone phosphate. It functions in the pathway carbohydrate biosynthesis; Calvin cycle. Its pathway is carbohydrate degradation; glycolysis; D-glyceraldehyde 3-phosphate and glycerone phosphate from D-glucose: step 4/4. In terms of biological role, catalyzes the aldol condensation of dihydroxyacetone phosphate (DHAP or glycerone-phosphate) with glyceraldehyde 3-phosphate (G3P) to form fructose 1,6-bisphosphate (FBP) in gluconeogenesis and the reverse reaction in glycolysis. This Cereibacter sphaeroides (Rhodobacter sphaeroides) protein is Fructose-bisphosphate aldolase 2 (cfxB).